The chain runs to 430 residues: Enolase (430 aa).

Gln167 is a (2R)-2-phosphoglycerate binding site. Glu209 acts as the Proton donor in catalysis. Positions 246, 289, and 316 each coordinate Mg(2+). Residues Lys341, Arg370, Ser371, and Lys392 each coordinate (2R)-2-phosphoglycerate. Lys341 (proton acceptor) is an active-site residue.

The protein belongs to the enolase family. In terms of assembly, component of the RNA degradosome, a multiprotein complex involved in RNA processing and mRNA degradation. The cofactor is Mg(2+).

The protein localises to the cytoplasm. Its subcellular location is the secreted. It localises to the cell surface. It catalyses the reaction (2R)-2-phosphoglycerate = phosphoenolpyruvate + H2O. It functions in the pathway carbohydrate degradation; glycolysis; pyruvate from D-glyceraldehyde 3-phosphate: step 4/5. Its function is as follows. Catalyzes the reversible conversion of 2-phosphoglycerate (2-PG) into phosphoenolpyruvate (PEP). It is essential for the degradation of carbohydrates via glycolysis. The sequence is that of Enolase from Alcanivorax borkumensis (strain ATCC 700651 / DSM 11573 / NCIMB 13689 / SK2).